The sequence spans 228 residues: Urease accessory protein UreF (228 aa).

It belongs to the UreF family. As to quaternary structure, ureD, UreF and UreG form a complex that acts as a GTP-hydrolysis-dependent molecular chaperone, activating the urease apoprotein by helping to assemble the nickel containing metallocenter of UreC. The UreE protein probably delivers the nickel.

Its subcellular location is the cytoplasm. Its function is as follows. Required for maturation of urease via the functional incorporation of the urease nickel metallocenter. This is Urease accessory protein UreF from Photorhabdus laumondii subsp. laumondii (strain DSM 15139 / CIP 105565 / TT01) (Photorhabdus luminescens subsp. laumondii).